The sequence spans 578 residues: Protein RIK (578 aa).

The segment at 1–34 is disordered; that stretch reads MTEDNDEARVPLSDSSTTNDASRTRQRRKRKWDK. The 68-residue stretch at 206–273 folds into the KH domain; sequence SSNVAARIRG…KSIDDAKRLA (68 aa). Residues 413 to 425 show a composition bias toward polar residues; sequence ATSLSIPSDNASN. A disordered region spans residues 413–578; the sequence is ATSLSIPSDN…DPDEPLTTRS (166 aa). Over residues 472–492 the composition is skewed to pro residues; that stretch reads PPSPRSVMPPPPPKTIAPPPS. Composition is skewed to low complexity over residues 493 to 503 and 510 to 521; these read KTMSPPSSKSM and SKTMSPLSSKSM. Residues 560–572 show a composition bias toward acidic residues; the sequence is YGDDEDDDDDPDE.

Interacts with AS1. Expressed in vegetative tissues.

The protein resides in the nucleus. This Arabidopsis thaliana (Mouse-ear cress) protein is Protein RIK (RIK).